Consider the following 344-residue polypeptide: Mycothiol acetyltransferase (344 aa).

Glu-36 contacts 1D-myo-inositol 2-(L-cysteinylamino)-2-deoxy-alpha-D-glucopyranoside. N-acetyltransferase domains follow at residues 40–179 (LALR…TPLP) and 187–344 (VTVR…PSTG). Residues 61-83 (ADTSGPNVPDTPGDQNAADTSTM) are disordered. The segment covering 73 to 83 (GDQNAADTSTM) has biased composition (polar residues). 109 to 111 (VVV) serves as a coordination point for acetyl-CoA. 1D-myo-inositol 2-(L-cysteinylamino)-2-deoxy-alpha-D-glucopyranoside-binding residues include Glu-214, Lys-253, and Glu-272. Residues 276 to 278 (VGV) and 283 to 289 (GGAGLGR) each bind acetyl-CoA. Tyr-310 contributes to the 1D-myo-inositol 2-(L-cysteinylamino)-2-deoxy-alpha-D-glucopyranoside binding site. Position 315–320 (315–320 (NVRAVR)) interacts with acetyl-CoA.

It belongs to the acetyltransferase family. MshD subfamily. Monomer.

The catalysed reaction is 1D-myo-inositol 2-(L-cysteinylamino)-2-deoxy-alpha-D-glucopyranoside + acetyl-CoA = mycothiol + CoA + H(+). Its function is as follows. Catalyzes the transfer of acetyl from acetyl-CoA to desacetylmycothiol (Cys-GlcN-Ins) to form mycothiol. The polypeptide is Mycothiol acetyltransferase (Frankia casuarinae (strain DSM 45818 / CECT 9043 / HFP020203 / CcI3)).